The primary structure comprises 259 residues: UPF0246 protein PSPTO_1244 (259 aa).

It belongs to the UPF0246 family.

This chain is UPF0246 protein PSPTO_1244, found in Pseudomonas syringae pv. tomato (strain ATCC BAA-871 / DC3000).